Consider the following 311-residue polypeptide: Acetyl-coenzyme A carboxylase carboxyl transferase subunit alpha (311 aa).

Residues lysine 36–glutamate 286 enclose the CoA carboxyltransferase C-terminal domain.

It belongs to the AccA family. Acetyl-CoA carboxylase is a heterohexamer composed of biotin carboxyl carrier protein (AccB), biotin carboxylase (AccC) and two subunits each of ACCase subunit alpha (AccA) and ACCase subunit beta (AccD).

The protein localises to the cytoplasm. It carries out the reaction N(6)-carboxybiotinyl-L-lysyl-[protein] + acetyl-CoA = N(6)-biotinyl-L-lysyl-[protein] + malonyl-CoA. The protein operates within lipid metabolism; malonyl-CoA biosynthesis; malonyl-CoA from acetyl-CoA: step 1/1. Functionally, component of the acetyl coenzyme A carboxylase (ACC) complex. First, biotin carboxylase catalyzes the carboxylation of biotin on its carrier protein (BCCP) and then the CO(2) group is transferred by the carboxyltransferase to acetyl-CoA to form malonyl-CoA. The protein is Acetyl-coenzyme A carboxylase carboxyl transferase subunit alpha of Aliarcobacter butzleri (strain RM4018) (Arcobacter butzleri).